The chain runs to 56 residues: Large ribosomal subunit protein bL33 (56 aa).

This sequence belongs to the bacterial ribosomal protein bL33 family.

The chain is Large ribosomal subunit protein bL33 from Halorhodospira halophila (strain DSM 244 / SL1) (Ectothiorhodospira halophila (strain DSM 244 / SL1)).